A 292-amino-acid chain; its full sequence is Fat storage-inducing transmembrane protein 1 (292 aa).

Over 1-18 (MERGPVVGAGLGAGARIQ) the chain is Lumenal. The chain crosses the membrane as a helical span at residues 19–39 (ALLGCLLKVLLWVASALLYFG). Topologically, residues 40–54 (SEQAARLLGSPCLRR) are cytoplasmic. The chain crosses the membrane as a helical span at residues 55 to 75 (LYHAWLAAVVIFGPLLQFHVN). At 76–94 (PRTIFASHGNFFNIKFVNS) the chain is on the lumenal side. A helical transmembrane segment spans residues 95-115 (AWGWTCTFLGGFVLLVVFLAT). The Cytoplasmic portion of the chain corresponds to 116 to 141 (RRVAVTARHLSRLVVGAAVWRGAGRA). The chain crosses the membrane as a helical span at residues 142 to 162 (FLLIEDLTGSCFEPLPQGLLL). Residues 163 to 187 (HELPDRRSCLAAGHQWRGYTVSSHT) are Lumenal-facing. Histidine 186 is a catalytic residue. A helical transmembrane segment spans residues 188–208 (FLLTFCCLLMAEEAAVFAKYL). Residues 209–220 (AHGLPAGAPLRL) are Cytoplasmic-facing. The helical transmembrane segment at 221-241 (VFLLNVLLLGLWNFLLLCTVI) threads the bilayer. At 242–249 (YFHQYTHK) the chain is on the lumenal side. Histidine 244 is a catalytic residue. The helical transmembrane segment at 250–270 (VVGAAVGTFAWYLTYGSWYHQ) threads the bilayer. The Cytoplasmic segment spans residues 271–292 (PWSPGSPGHGLFPRPHSSRKHN).

The protein belongs to the FIT family. FIT1 subfamily. In terms of tissue distribution, primarily expressed in heart and skeletal muscle.

It localises to the endoplasmic reticulum membrane. Its function is as follows. Plays an important role in the formation of lipid droplets (LDs) which are storage organelles at the center of lipid and energy homeostasis. Directly binds to diacylglycerol (DAGs) and triacylglycerol. In Homo sapiens (Human), this protein is Fat storage-inducing transmembrane protein 1.